A 187-amino-acid chain; its full sequence is Dihydrofolate reductase (187 aa).

The region spanning 4–185 (PLNCIVAVSQ…IKYKFEVYEK (182 aa)) is the DHFR domain. Residues alanine 10 and 16-22 (GIGKNGD) contribute to the NADP(+) site. 31-36 (EFKYFQ) provides a ligand contact to substrate. An N6-acetyllysine; alternate modification is found at lysine 33. The residue at position 33 (lysine 33) is an N6-succinyllysine; alternate. An NADP(+)-binding site is contributed by 55-57 (RKT). A substrate-binding site is contributed by arginine 71. NADP(+)-binding positions include 77-79 (SRE) and 117-124 (GGSSVYQE).

The protein belongs to the dihydrofolate reductase family. In terms of assembly, homodimer.

The protein localises to the mitochondrion. Its subcellular location is the cytoplasm. The catalysed reaction is (6S)-5,6,7,8-tetrahydrofolate + NADP(+) = 7,8-dihydrofolate + NADPH + H(+). The protein operates within cofactor biosynthesis; tetrahydrofolate biosynthesis; 5,6,7,8-tetrahydrofolate from 7,8-dihydrofolate: step 1/1. Key enzyme in folate metabolism. Contributes to the de novo mitochondrial thymidylate biosynthesis pathway. Catalyzes an essential reaction for de novo glycine and purine synthesis, and for DNA precursor synthesis. Binds its own mRNA. This chain is Dihydrofolate reductase (Dhfr), found in Rattus norvegicus (Rat).